The primary structure comprises 1301 residues: DNA-directed RNA polymerase subunit beta (1301 aa).

The protein belongs to the RNA polymerase beta chain family. As to quaternary structure, the RNAP catalytic core consists of 2 alpha, 1 beta, 1 beta' and 1 omega subunit. When a sigma factor is associated with the core the holoenzyme is formed, which can initiate transcription.

It catalyses the reaction RNA(n) + a ribonucleoside 5'-triphosphate = RNA(n+1) + diphosphate. In terms of biological role, DNA-dependent RNA polymerase catalyzes the transcription of DNA into RNA using the four ribonucleoside triphosphates as substrates. This Chlorobium luteolum (strain DSM 273 / BCRC 81028 / 2530) (Pelodictyon luteolum) protein is DNA-directed RNA polymerase subunit beta.